The chain runs to 279 residues: Acetylglutamate kinase (279 aa).

Substrate contacts are provided by residues 64–65, Arg86, and Asn177; that span reads GG.

The protein belongs to the acetylglutamate kinase family. ArgB subfamily.

It localises to the cytoplasm. The enzyme catalyses N-acetyl-L-glutamate + ATP = N-acetyl-L-glutamyl 5-phosphate + ADP. It functions in the pathway amino-acid biosynthesis; L-arginine biosynthesis; N(2)-acetyl-L-ornithine from L-glutamate: step 2/4. Functionally, catalyzes the ATP-dependent phosphorylation of N-acetyl-L-glutamate. This chain is Acetylglutamate kinase, found in Campylobacter jejuni subsp. jejuni serotype O:6 (strain 81116 / NCTC 11828).